Reading from the N-terminus, the 631-residue chain is Probable glutamate--tRNA ligase, cytoplasmic (631 aa).

139–141 is a binding site for L-glutamate; that stretch reads RFP. The 'HIGH' region motif lies at 144–153; sequence PSGFLHIGHI. An ATP-binding site is contributed by His149. L-glutamate contacts are provided by residues Asp173, 311–315, and Arg329; that span reads YDFAC. ATP is bound by residues Glu332 and 367–371; that span reads VLSKR. Positions 367 to 371 match the 'KMSKS' region motif; it reads VLSKR.

This sequence belongs to the class-I aminoacyl-tRNA synthetase family. Glutamate--tRNA ligase type 2 subfamily.

The protein resides in the cytoplasm. It catalyses the reaction tRNA(Glu) + L-glutamate + ATP = L-glutamyl-tRNA(Glu) + AMP + diphosphate. In Enterocytozoon bieneusi (strain H348) (Microsporidian parasite), this protein is Probable glutamate--tRNA ligase, cytoplasmic.